The primary structure comprises 483 residues: Altronate oxidoreductase (483 aa).

Residue 18–29 (IIQFGEGNFLRA) participates in NAD(+) binding.

The protein belongs to the mannitol dehydrogenase family. UxaB subfamily.

The catalysed reaction is D-altronate + NAD(+) = keto-D-tagaturonate + NADH + H(+). Its pathway is carbohydrate metabolism; pentose and glucuronate interconversion. The chain is Altronate oxidoreductase from Cronobacter sakazakii (strain ATCC BAA-894) (Enterobacter sakazakii).